The primary structure comprises 67 residues: Non-specific lipid-transfer protein 2P (67 aa).

4 cysteine pairs are disulfide-bonded: cysteine 2-cysteine 34, cysteine 10-cysteine 24, cysteine 25-cysteine 60, and cysteine 36-cysteine 67.

Transfer lipids across membranes. May play a role in plant defense or in the biosynthesis of cuticle layers. This Triticum aestivum (Wheat) protein is Non-specific lipid-transfer protein 2P.